The primary structure comprises 477 residues: Ribulose bisphosphate carboxylase large chain (477 aa).

Positions 1 to 2 (MS) are excised as a propeptide. Pro-3 is subject to N-acetylproline. Lys-14 carries the post-translational modification N6,N6,N6-trimethyllysine. Asn-123 and Thr-173 together coordinate substrate. The Proton acceptor role is filled by Lys-175. Lys-177 contacts substrate. Lys-201, Asp-203, and Glu-204 together coordinate Mg(2+). Residue Lys-201 is modified to N6-carboxylysine. The active-site Proton acceptor is His-294. 3 residues coordinate substrate: Arg-295, His-327, and Ser-379.

Belongs to the RuBisCO large chain family. Type I subfamily. In terms of assembly, heterohexadecamer of 8 large chains and 8 small chains; disulfide-linked. The disulfide link is formed within the large subunit homodimers. It depends on Mg(2+) as a cofactor. The disulfide bond which can form in the large chain dimeric partners within the hexadecamer appears to be associated with oxidative stress and protein turnover.

It is found in the plastid. The protein localises to the chloroplast. It catalyses the reaction 2 (2R)-3-phosphoglycerate + 2 H(+) = D-ribulose 1,5-bisphosphate + CO2 + H2O. It carries out the reaction D-ribulose 1,5-bisphosphate + O2 = 2-phosphoglycolate + (2R)-3-phosphoglycerate + 2 H(+). RuBisCO catalyzes two reactions: the carboxylation of D-ribulose 1,5-bisphosphate, the primary event in carbon dioxide fixation, as well as the oxidative fragmentation of the pentose substrate in the photorespiration process. Both reactions occur simultaneously and in competition at the same active site. This is Ribulose bisphosphate carboxylase large chain from Agrostis stolonifera (Creeping bentgrass).